We begin with the raw amino-acid sequence, 235 residues long: Orotidine 5'-phosphate decarboxylase (235 aa).

Residues Asp-9, Lys-31, 58 to 67 (DLKFHDIPNT), Thr-121, Arg-180, Gln-190, Gly-210, and Arg-211 contribute to the substrate site. The active-site Proton donor is Lys-60.

This sequence belongs to the OMP decarboxylase family. Type 1 subfamily. As to quaternary structure, homodimer.

The catalysed reaction is orotidine 5'-phosphate + H(+) = UMP + CO2. It functions in the pathway pyrimidine metabolism; UMP biosynthesis via de novo pathway; UMP from orotate: step 2/2. Functionally, catalyzes the decarboxylation of orotidine 5'-monophosphate (OMP) to uridine 5'-monophosphate (UMP). This is Orotidine 5'-phosphate decarboxylase from Nitratidesulfovibrio vulgaris (strain ATCC 29579 / DSM 644 / CCUG 34227 / NCIMB 8303 / VKM B-1760 / Hildenborough) (Desulfovibrio vulgaris).